The following is a 342-amino-acid chain: N-acetyl-gamma-glutamyl-phosphate reductase (342 aa).

Cysteine 146 is a catalytic residue.

The protein belongs to the NAGSA dehydrogenase family. Type 1 subfamily.

Its subcellular location is the cytoplasm. It carries out the reaction N-acetyl-L-glutamate 5-semialdehyde + phosphate + NADP(+) = N-acetyl-L-glutamyl 5-phosphate + NADPH + H(+). The protein operates within amino-acid biosynthesis; L-arginine biosynthesis; N(2)-acetyl-L-ornithine from L-glutamate: step 3/4. In terms of biological role, catalyzes the NADPH-dependent reduction of N-acetyl-5-glutamyl phosphate to yield N-acetyl-L-glutamate 5-semialdehyde. This chain is N-acetyl-gamma-glutamyl-phosphate reductase, found in Saccharopolyspora erythraea (strain ATCC 11635 / DSM 40517 / JCM 4748 / NBRC 13426 / NCIMB 8594 / NRRL 2338).